The chain runs to 247 residues: MMAGSTTTTTAAVRVRGAGRAFAGRQVLRGVDLDIAPGEFVALLGASGSGKSTLLRAIGGLDRGFTGTLEAPRSKAIVFQEHRLIPWISVWRNVVLGVRGRDLAARARTALDEVGLSAEADAWPATLSGGEAQRVALARALVRHPDLLLLDEPFGALDALTRLKAQALVARLWQQHRPAVLLVTHDVEEALLLADRALVLRDGRIAESFDITVTRPRSVVDPEFSALRRRLLLALGVDPDAPTGAQS.

The ABC transporter domain occupies Val-13 to Leu-227. Gly-45–Ser-52 contributes to the ATP binding site.

This sequence belongs to the ABC transporter superfamily. Aliphatic sulfonates importer (TC 3.A.1.17.2) family. In terms of assembly, the complex is composed of two ATP-binding proteins (SsuB), two transmembrane proteins (SsuC) and a solute-binding protein (SsuA).

Its subcellular location is the cell membrane. The enzyme catalyses ATP + H2O + aliphatic sulfonate-[sulfonate-binding protein]Side 1 = ADP + phosphate + aliphatic sulfonateSide 2 + [sulfonate-binding protein]Side 1.. Its function is as follows. Part of the ABC transporter complex SsuABC involved in aliphatic sulfonates import. Responsible for energy coupling to the transport system. In Nocardia farcinica (strain IFM 10152), this protein is Aliphatic sulfonates import ATP-binding protein SsuB 3.